Reading from the N-terminus, the 58-residue chain is Large ribosomal subunit protein bL32 (58 aa).

A compositionally biased stretch (basic residues) spans 1–15; it reads MAVPKKKTSKAKRNQ. Residues 1 to 23 are disordered; the sequence is MAVPKKKTSKAKRNQRSATWKGK.

It belongs to the bacterial ribosomal protein bL32 family.

The chain is Large ribosomal subunit protein bL32 from Synechococcus sp. (strain CC9902).